The chain runs to 304 residues: Putative S-adenosyl-L-methionine-dependent methyltransferase MAV_4444 (304 aa).

S-adenosyl-L-methionine contacts are provided by residues aspartate 130 and 159 to 160; that span reads DL.

This sequence belongs to the UPF0677 family.

Exhibits S-adenosyl-L-methionine-dependent methyltransferase activity. This chain is Putative S-adenosyl-L-methionine-dependent methyltransferase MAV_4444, found in Mycobacterium avium (strain 104).